Here is a 532-residue protein sequence, read N- to C-terminus: Germ cell nuclear acidic-1 protein (532 aa).

Over residues 1-10 (MPTPFRDLHN) the composition is skewed to basic and acidic residues. Disordered stretches follow at residues 1-50 (MPTP…EPIS), 84-181 (REAP…GNFE), and 213-253 (YISE…DRKQ). The segment covering 14–32 (ASASSYETAWSSSFSSRRS) has biased composition (low complexity). Composition is skewed to basic and acidic residues over residues 39–48 (SNLKEIKDEP), 94–107 (LLQK…RDML), and 124–133 (KPKEVKKALK). Over residues 213–235 (YISEESSEEESEEEEEDVDDEEY) the composition is skewed to acidic residues. Basic and acidic residues predominate over residues 236-251 (RESSPEVEAKISYSDR). A SprT-like domain is found at 308 to 398 (RRIFSAIPSE…GARCSSVFKS (91 aa)). The segment at 468-489 (AKPVGPILSNSSKPSPPAPRRI) is disordered.

The protein belongs to the serine-aspartate repeat-containing protein (SDr) family. As to quaternary structure, interacts with top-2; this interaction allows the resolution of topoisomerase II (top-2) DNA-protein cross-links. As to expression, mainly expressed in germ cells and early embryonic, proliferating cells.

Its subcellular location is the chromosome. May play a role in DNA-protein cross-links (DPCs) clearance through a SUMO-dependent recruitment to sites of DPCs, ensuring the genomic stability by protecting germ cells and early embryos from various sources of damage. May resolve the topoisomerase II (top-2) DPCs. Limits replication stress and DNA double-strand breaks. This Caenorhabditis elegans protein is Germ cell nuclear acidic-1 protein.